The following is a 364-amino-acid chain: tRNA 2-selenouridine synthase (364 aa).

Positions 14-137 constitute a Rhodanese domain; that stretch reads LLADTPLIDV…LRQTAIQATW (124 aa). The S-selanylcysteine intermediate role is filled by C97.

It belongs to the SelU family. In terms of assembly, monomer.

It catalyses the reaction 5-methylaminomethyl-2-thiouridine(34) in tRNA + selenophosphate + (2E)-geranyl diphosphate + H2O + H(+) = 5-methylaminomethyl-2-selenouridine(34) in tRNA + (2E)-thiogeraniol + phosphate + diphosphate. The enzyme catalyses 5-methylaminomethyl-2-thiouridine(34) in tRNA + (2E)-geranyl diphosphate = 5-methylaminomethyl-S-(2E)-geranyl-thiouridine(34) in tRNA + diphosphate. It carries out the reaction 5-methylaminomethyl-S-(2E)-geranyl-thiouridine(34) in tRNA + selenophosphate + H(+) = 5-methylaminomethyl-2-(Se-phospho)selenouridine(34) in tRNA + (2E)-thiogeraniol. The catalysed reaction is 5-methylaminomethyl-2-(Se-phospho)selenouridine(34) in tRNA + H2O = 5-methylaminomethyl-2-selenouridine(34) in tRNA + phosphate. Its function is as follows. Involved in the post-transcriptional modification of the uridine at the wobble position (U34) of tRNA(Lys), tRNA(Glu) and tRNA(Gln). Catalyzes the conversion of 2-thiouridine (S2U-RNA) to 2-selenouridine (Se2U-RNA). Acts in a two-step process involving geranylation of 2-thiouridine (S2U) to S-geranyl-2-thiouridine (geS2U) and subsequent selenation of the latter derivative to 2-selenouridine (Se2U) in the tRNA chain. The chain is tRNA 2-selenouridine synthase from Salmonella choleraesuis (strain SC-B67).